A 240-amino-acid polypeptide reads, in one-letter code: Probable transcriptional activator (240 aa).

The essential for the oxygen-regulated activity stretch occupies residues 17–28 (CTSCQARHGVVC). One can recognise an HTH crp-type domain in the interval 158-232 (RTAEEKVASL…FRHIIVPDMD (75 aa)). The H-T-H motif DNA-binding region spans 191–210 (RAEIADFLGLTIETVSRQMT).

In terms of biological role, promotes the microaerobic and symbiotic induction of fixN, possibly by binding to the FNR consensus binding site upstream of fixN. The chain is Probable transcriptional activator (fnrN) from Rhizobium leguminosarum bv. viciae.